Consider the following 121-residue polypeptide: Large ribosomal subunit protein bL21 (121 aa).

Belongs to the bacterial ribosomal protein bL21 family. As to quaternary structure, part of the 50S ribosomal subunit. Contacts protein L20.

This protein binds to 23S rRNA in the presence of protein L20. In Synechococcus sp. (strain CC9605), this protein is Large ribosomal subunit protein bL21.